Here is an 826-residue protein sequence, read N- to C-terminus: BLOC-2 complex member HPS5 homolog (826 aa).

3 WD repeats span residues 22–61 (KHHN…LLLI), 63–102 (NKHG…QATP), and 110–149 (DQSV…GHSL). The segment covering 422 to 446 (ALDTHSSGGSSATTERSLSGGSSSR) has biased composition (polar residues). Positions 422–447 (ALDTHSSGGSSATTERSLSGGSSSRA) are disordered.

It belongs to the HPS5 family. As to expression, expressed in eye pigment granules.

Has a role in the biogenesis of eye pigment granules. Eye pigment granules are specialized forms of late endosomes or lysosomes. Biogenesis of pigment granules in the eye requires molecular components required for protein delivery to lysosomes. The chain is BLOC-2 complex member HPS5 homolog from Drosophila melanogaster (Fruit fly).